The following is a 1545-amino-acid chain: ATP-binding cassette sub-family C member 2 (1545 aa).

The Extracellular segment spans residues 1–27 (MLEKFCNSTFWNSSFLDSPEADLPLCF). N7 and N12 each carry an N-linked (GlcNAc...) asparagine glycan. A helical membrane pass occupies residues 28 to 48 (EQTVLVWIPLGYLWLLAPWQL). The Cytoplasmic segment spans residues 49–68 (LHVYKSRTKRSSTTKLYLAK). Residues 69 to 89 (QVFVGFLLILAAIELALVLTE) form a helical membrane-spanning segment. Topologically, residues 90-93 (DSGQ) are extracellular. A helical membrane pass occupies residues 94–114 (ATVPAVRYTNPSLYLGTWLLV). The Cytoplasmic segment spans residues 115 to 126 (LLIQYSRQWCVQ). Residues 127–147 (KNSWFLSLFWILSILCGTFQF) traverse the membrane as a helical segment. Residues 148–165 (QTLIRTLLQGDNSNLAYS) are Extracellular-facing. A helical transmembrane segment spans residues 166–186 (CLFFISYGFQILILIFSAFSE). The Cytoplasmic segment spans residues 187 to 313 (NNESSNNPSS…DVPKSWLMKA (127 aa)). The segment at 253-284 (ARRALQRRQEKSSQQNSGARLPGLNKNQSQSQ) is disordered. S281 and S283 each carry phosphoserine. Residues 314-334 (LFKTFYMVLLKSFLLKLVNDI) traverse the membrane as a helical segment. The ABC transmembrane type-1 1 domain maps to 322 to 605 (LLKSFLLKLV…LPMMISSMLQ (284 aa)). The Extracellular segment spans residues 335–360 (FTFVSPQLLKLLISFASDRDTYLWIG). The helical transmembrane segment at 361-381 (YLCAILLFTAALIQSFCLQCY) threads the bilayer. The Cytoplasmic segment spans residues 382-437 (FQLCFKLGVKVRTAIMASVYKKALTLSNLARKEYTVGETVNLMSVDAQKLMDVTNF). A helical transmembrane segment spans residues 438–458 (MHMLWSSVLQIVLSIFFLWRE). The Extracellular segment spans residues 459–461 (LGP). The helical transmembrane segment at 462-482 (SVLAGVGVMVLVIPINAILST) threads the bilayer. Over 483–544 (KSKTIQVKNM…NLLAFSQLQC (62 aa)) the chain is Cytoplasmic. Residues 545–565 (VVIFVFQLTPVLVSVVTFSVY) traverse the membrane as a helical segment. Residues 566–587 (VLVDSNNILDAQKAFTSITLFN) lie on the Extracellular side of the membrane. The helical transmembrane segment at 588 to 608 (ILRFPLSMLPMMISSMLQASV) threads the bilayer. At 609–971 (STERLEKYLG…VKFSIYLEYL (363 aa)) the chain is on the cytoplasmic side. In terms of domain architecture, ABC transporter 1 spans 637–861 (MQFSEASFTW…KGEFAKNLKT (225 aa)). An ATP-binding site is contributed by 671-678 (GPVGSGKS). 4 positions are modified to phosphoserine: S878, S926, S930, and S938. Residues 972 to 992 (QAIGLFSIFFIILAFVMNSVA) traverse the membrane as a helical segment. The ABC transmembrane type-1 2 domain occupies 979-1264 (IFFIILAFVM…LVRMTSEIET (286 aa)). The Extracellular portion of the chain corresponds to 993-1033 (FIGSNLWLSAWTSDSKIFNSTDYPASQRDMRVGVYGALGLA). Residue N1011 is glycosylated (N-linked (GlcNAc...) asparagine). The helical transmembrane segment at 1034–1054 (QGIFVFIAHFWSAFGFVHASN) threads the bilayer. Topologically, residues 1055–1097 (ILHKQLLNNILRAPMRFFDTTPTGRIVNRFAGDISTVDDTLPQ) are cytoplasmic. A helical membrane pass occupies residues 1098–1118 (SLRSWITCFLGIISTLVMICM). Residue A1119 is a topological domain, extracellular. The chain crosses the membrane as a helical span at residues 1120–1140 (TPVFTIIVIPLGIIYVSVQMF). Topologically, residues 1141–1211 (YVSTSRQLRR…TSNRWLAIRL (71 aa)) are cytoplasmic. Residues 1212 to 1232 (ELVGNLTVFFSALMMVIYRDT) form a helical membrane-spanning segment. Topologically, residues 1233 to 1234 (LS) are extracellular. The helical transmembrane segment at 1235-1255 (GDTVGFVLSNALNITQTLNWL) threads the bilayer. The Cytoplasmic segment spans residues 1256-1545 (VRMTSEIETN…GIENVNSTKF (290 aa)). The ABC transporter 2 domain occupies 1300 to 1534 (IQFNNYQVRY…PGPFYFMAKE (235 aa)). 1334-1341 (GRTGAGKS) contributes to the ATP binding site. S1438 is subject to Phosphoserine.

It belongs to the ABC transporter superfamily. ABCC family. Conjugate transporter (TC 3.A.1.208) subfamily. As to expression, expressed by polarized cells in liver, kidney and intestine. The highest expression is found in liver. Expressed in small intestine.

The protein localises to the apical cell membrane. It catalyses the reaction ATP + H2O + xenobioticSide 1 = ADP + phosphate + xenobioticSide 2.. The enzyme catalyses an S-substituted glutathione(in) + ATP + H2O = an S-substituted glutathione(out) + ADP + phosphate + H(+). The catalysed reaction is taurolithocholate 3-sulfate(in) + ATP + H2O = taurolithocholate 3-sulfate(out) + ADP + phosphate + H(+). It carries out the reaction leukotriene C4(in) + ATP + H2O = leukotriene C4(out) + ADP + phosphate + H(+). It catalyses the reaction 17beta-estradiol 17-O-(beta-D-glucuronate)(in) + ATP + H2O = 17beta-estradiol 17-O-(beta-D-glucuronate)(out) + ADP + phosphate + H(+). The enzyme catalyses (4Z,15Z)-bilirubin IXalpha C8-beta-D-glucuronoside(in) + ATP + H2O = (4Z,15Z)-bilirubin IXalpha C8-beta-D-glucuronoside(out) + ADP + phosphate + H(+). The catalysed reaction is (4Z,15Z)-bilirubin IXalpha C8,C12-beta-D-bisglucuronoside(in) + ATP + H2O = (4Z,15Z)-bilirubin IXalpha C8,C12-beta-D-bisglucuronoside(out) + ADP + phosphate + H(+). Functionally, ATP-dependent transporter of the ATP-binding cassette (ABC) family that binds and hydrolyzes ATP to enable active transport of various substrates including many drugs, toxicants and endogenous compound across cell membranes. Transports a wide variety of conjugated organic anions such as sulfate-, glucuronide- and glutathione (GSH)-conjugates of endo- and xenobiotics substrates. Mediates hepatobiliary excretion of mono- and bis-glucuronidated bilirubin molecules and therefore play an important role in bilirubin detoxification. Also mediates hepatobiliary excretion of others glucuronide conjugates such as 17beta-estradiol 17-glucosiduronic acid and leukotriene C4. Transports sulfated bile salt such as taurolithocholate sulfate. Transports various anticancer drugs, such as anthracycline, vinca alkaloid and methotrexate and HIV-drugs such as protease inhibitors. Confers resistance to several anti-cancer drugs including cisplatin, doxorubicin, epirubicin, methotrexate, etoposide and vincristine. In Homo sapiens (Human), this protein is ATP-binding cassette sub-family C member 2.